The sequence spans 108 residues: Anthranilate 1,2-dioxygenase ferredoxin subunit (108 aa).

Residues 9–105 form the Rieske domain; sequence WHPLGAIDEF…IRIVDGQVEV (97 aa). [2Fe-2S] cluster contacts are provided by C49, H51, C68, and H71.

Belongs to the bacterial ring-hydroxylating dioxygenase ferredoxin component family. In terms of assembly, part of a multicomponent enzyme system composed of a reductase (AndAa), a ferredoxin (AndAb) and a two-subunit oxygenase component (AndAc and AndAd). It depends on [2Fe-2S] cluster as a cofactor.

It participates in aromatic compound metabolism; anthranilate degradation via hydroxylation; catechol from anthranilate: step 1/1. Functionally, part of the multicomponent anthranilate dioxygenase, that converts anthranilate to catechol. This protein seems to be a 2Fe-2S ferredoxin. The chain is Anthranilate 1,2-dioxygenase ferredoxin subunit from Burkholderia cepacia (Pseudomonas cepacia).